A 167-amino-acid polypeptide reads, in one-letter code: Adenylylsulfate reductase subunit beta (167 aa).

2 consecutive 4Fe-4S ferredoxin-type domains span residues 1–35 (MPTFVDPSKCDGCKGGEKTACMYICPNDLMILDPE) and 38–67 (KAFNQEPEACWECYSCIKICPQGAITARPY). Positions 10, 13, 21, 25, 47, 50, 53, and 57 each coordinate [4Fe-4S] cluster.

As to quaternary structure, heterodimer composed of AprA and AprB. The heterodimers can dimerize to form heterotetramers. It depends on [4Fe-4S] cluster as a cofactor.

The protein localises to the cytoplasm. Iron-sulfur cluster subunit of the adenylylsulfate reductase which catalyzes reversibly the reduction of adenosine 5'-phosphosulfate (APS) to sulfite and AMP during dissimilatory sulfate reduction. The iron-sulfur cluster 2 is thought to accept electrons from a still unknown electron donor and transfer electrons to the iron-sulfur cluster 1 of this protein and then onto the FAD of AprA. The chain is Adenylylsulfate reductase subunit beta from Megalodesulfovibrio gigas (strain ATCC 19364 / DSM 1382 / NCIMB 9332 / VKM B-1759) (Desulfovibrio gigas).